A 47-amino-acid polypeptide reads, in one-letter code: Defensin-like protein 2 (47 aa).

4 cysteine pairs are disulfide-bonded: cysteine 3–cysteine 47, cysteine 14–cysteine 36, cysteine 20–cysteine 41, and cysteine 24–cysteine 43.

The protein belongs to the DEFL family.

This is Defensin-like protein 2 from Zea mays (Maize).